We begin with the raw amino-acid sequence, 294 residues long: Flavin-dependent thymidylate synthase (294 aa).

Residues 27–250 (GFIRVIDYMG…PFTYEAFEEY (224 aa)) enclose the ThyX domain. FAD is bound by residues Thr73, 96-98 (RHR), and Glu104. DUMP contacts are provided by residues 93 to 96 (QWIR), 104 to 108 (EYSAR), and Arg189. Residues 96 to 106 (RHRTASVNEYS) carry the ThyX motif motif. FAD is bound by residues 205-207 (NLH) and His211. Arg216 lines the dUMP pocket. Arg216 acts as the Involved in ionization of N3 of dUMP, leading to its activation in catalysis.

This sequence belongs to the thymidylate synthase ThyX family. As to quaternary structure, homotetramer. The cofactor is FAD.

It carries out the reaction dUMP + (6R)-5,10-methylene-5,6,7,8-tetrahydrofolate + NADPH + H(+) = dTMP + (6S)-5,6,7,8-tetrahydrofolate + NADP(+). Its pathway is pyrimidine metabolism; dTTP biosynthesis. Catalyzes the reductive methylation of 2'-deoxyuridine-5'-monophosphate (dUMP) to 2'-deoxythymidine-5'-monophosphate (dTMP) while utilizing 5,10-methylenetetrahydrofolate (mTHF) as the methyl donor, and NADPH and FADH(2) as the reductant. The protein is Flavin-dependent thymidylate synthase of Rickettsia bellii (strain RML369-C).